Here is a 94-residue protein sequence, read N- to C-terminus: Aspartyl/glutamyl-tRNA(Asn/Gln) amidotransferase subunit C (94 aa).

Belongs to the GatC family. In terms of assembly, heterotrimer of A, B and C subunits.

It carries out the reaction L-glutamyl-tRNA(Gln) + L-glutamine + ATP + H2O = L-glutaminyl-tRNA(Gln) + L-glutamate + ADP + phosphate + H(+). The catalysed reaction is L-aspartyl-tRNA(Asn) + L-glutamine + ATP + H2O = L-asparaginyl-tRNA(Asn) + L-glutamate + ADP + phosphate + 2 H(+). Its function is as follows. Allows the formation of correctly charged Asn-tRNA(Asn) or Gln-tRNA(Gln) through the transamidation of misacylated Asp-tRNA(Asn) or Glu-tRNA(Gln) in organisms which lack either or both of asparaginyl-tRNA or glutaminyl-tRNA synthetases. The reaction takes place in the presence of glutamine and ATP through an activated phospho-Asp-tRNA(Asn) or phospho-Glu-tRNA(Gln). In Heliobacterium modesticaldum (strain ATCC 51547 / Ice1), this protein is Aspartyl/glutamyl-tRNA(Asn/Gln) amidotransferase subunit C.